The following is a 620-amino-acid chain: Carotenoid isomerooxygenase (620 aa).

Fe cation-binding residues include H211, H267, and H337. Positions 440-459 are disordered; it reads NGKQATAGEESPKRDAKRGR. The span at 449–459 shows a compositional bias: basic and acidic residues; the sequence is ESPKRDAKRGR. H612 serves as a coordination point for Fe cation.

Belongs to the carotenoid oxygenase family. Fe(2+) serves as cofactor. Expression follows organogenesis of the larval Bolwig's organ (BO), which mediates larval photophobic behavior. In the adult, expression is restricted exclusively to the brain. Expressed in both neuronal cells and glia cells. Not active within photoreceptors. Active within neuronal cells within the central nervous system.

The enzyme catalyses all-trans-zeaxanthin + O2 = (3R)-11-cis-3-hydroxyretinal + (3R)-all-trans-3-hydroxyretinal. It functions in the pathway cofactor metabolism; retinol metabolism. Catalyzes the oxidative cleavage at the 15,15'-double bond of carotenoids and the simultaneous all-trans to 11-cis isomerization of one cleavage product. Carotenoids like 11-cis retinal can promote visual pigment biogenesis in the dark. Essential for the biosynthesis of the 3-hydroxyretinal chromophore of rhodopsin from zeaxanthin and for proper photoreceptor development. Also essential for larval light perception. This Drosophila melanogaster (Fruit fly) protein is Carotenoid isomerooxygenase (ninaB).